Reading from the N-terminus, the 111-residue chain is MNAHKERLESNLLELLQEALASLNDGELNSLSVTKVECSKGKHHAYVFVLSSDHKILSKLKKAEGLIRQFVLQASGWFKCPKLSFVLDNSLEKQLRLDAIFNEIAKGKGND.

It belongs to the RbfA family. As to quaternary structure, monomer. Binds 30S ribosomal subunits, but not 50S ribosomal subunits or 70S ribosomes.

Its subcellular location is the cytoplasm. In terms of biological role, one of several proteins that assist in the late maturation steps of the functional core of the 30S ribosomal subunit. Associates with free 30S ribosomal subunits (but not with 30S subunits that are part of 70S ribosomes or polysomes). Required for efficient processing of 16S rRNA. May interact with the 5'-terminal helix region of 16S rRNA. This is Ribosome-binding factor A from Helicobacter pylori (strain G27).